The chain runs to 243 residues: MASLFKDPTKLSAYRDRRFTGTQEEYEAALQASVTVYVGNMSFYTTEEQAYELFSRAGEIRKIIMGLDKNSKTPCGFCFILYYSREDAEDAVKYISGTMLDDRPIRVDFDWGFEEGRQWGRGRSGGQVRDEYRTDYDPGRGGYGKMVQKELEAQRELVDYGGAFQPNAPPQYDRGDRKRGYGDSYRNDRDYQRKRYRNDERSSQRAPDSEFKRDAIDSEKNPRFREKGDSDEEDDDYDKRRRR.

MRNA-binding positions include Tyr14, Tyr37, 106-110, 117-121, and 127-128; these read RVDFD, RQWGR, and QV. The RRM domain maps to 34–112; sequence VTVYVGNMSF…RPIRVDFDWG (79 aa). Disordered regions lie at residues 120 to 144 and 161 to 243; these read GRGR…GGYG and GGAF…RRRR. Basic and acidic residues-rich tracts occupy residues 128-138 and 173-228; these read VRDEYRTDYDP and DRGD…REKG.

This sequence belongs to the RRM NCBP2 family. As to quaternary structure, component of the nuclear cap-binding complex (CBC), a heterodimer composed of ABH1/CBP80 and CBP20 that interacts with m7GpppG-capped RNA.

It is found in the nucleus. It localises to the cytoplasm. Its function is as follows. Component of the cap-binding complex (CBC), which binds co-transcriptionally to the 5' cap of pre-mRNAs and is involved in various processes such as pre-mRNA splicing and RNA-mediated gene silencing (RNAi) by microRNAs (miRNAs). The CBC complex is involved in miRNA-mediated RNA interference and is required for primary miRNA processing. In the CBC complex, CBP20 recognizes and binds capped RNAs (m7GpppG-capped RNA) but requires ABH1/CBP80 to stabilize the movement of its N-terminal loop and lock the CBC into a high affinity cap-binding state with the cap structure. CBP20 also plays a role in stabilization of ABH1/CBP80 and ABH1/CBP80 localization to the nucleus. This is Nuclear cap-binding protein subunit 2 (CBP20) from Oryza sativa subsp. japonica (Rice).